A 366-amino-acid chain; its full sequence is MFKNNNIINDRITNLVSQINKLKRRLDYDIKKNRLLEINMELKLPETWKHPSLIKKINKEKNQLISVVTQITKIDNDVQELIDILNLENSNNINSILDNVLYEFKNIEKSIHELEKCSMFLGKYDYLSCYVDIQSGSGGVEAQDWASMLLRMYVRWAESKKFKIDIIEQTYGEVVGIKSATIEVLGKYAFGWFRTETGIHRLVRKSPFNAHHRRHTSFSSVYVYPILDDAINVDINTRDLKIDVYRASGAGGQHVNKTESAVRIRHLPTGIVVQCQNDRSQHKNKDQAMKQLKAKLYEQLINEKKCQQKILENNKLNIGWGHQIRSYTLDNSRIKDLRTGVESKNIQSVLDGGLDLFVECSLRNGL.

Residue glutamine 253 is modified to N5-methylglutamine.

It belongs to the prokaryotic/mitochondrial release factor family. Post-translationally, methylated by PrmC. Methylation increases the termination efficiency of RF2.

The protein resides in the cytoplasm. Its function is as follows. Peptide chain release factor 2 directs the termination of translation in response to the peptide chain termination codons UGA and UAA. The protein is Peptide chain release factor 2 (prfB) of Buchnera aphidicola subsp. Baizongia pistaciae (strain Bp).